Here is a 344-residue protein sequence, read N- to C-terminus: Cyclin-G2 (344 aa).

The segment covering 301–313 has biased composition (acidic residues); that stretch reads ESESEDSCEDMSC. The interval 301 to 320 is disordered; it reads ESESEDSCEDMSCGEESLSS.

This sequence belongs to the cyclin family. Cyclin G subfamily. As to expression, high levels in cerebellum, thymus, spleen and prostate. Low levels in skeletal muscle.

The protein localises to the cytoplasm. Its function is as follows. May play a role in growth regulation and in negative regulation of cell cycle progression. The polypeptide is Cyclin-G2 (CCNG2) (Homo sapiens (Human)).